Here is a 104-residue protein sequence, read N- to C-terminus: Cell division protein FtsB (104 aa).

The Cytoplasmic portion of the chain corresponds to 1–3 (MGK). A helical transmembrane segment spans residues 4–21 (LTLLLLVLLGWLQYSLWL). Over 22 to 104 (GKNGIHDYTR…NAQQGRPASQ (83 aa)) the chain is Periplasmic. Residues 33–62 (DEDVASQQGNNAKLKARNDRLFAEIDDLNG) are a coiled coil.

The protein belongs to the FtsB family. In terms of assembly, part of a complex composed of FtsB, FtsL and FtsQ.

The protein resides in the cell inner membrane. Essential cell division protein. May link together the upstream cell division proteins, which are predominantly cytoplasmic, with the downstream cell division proteins, which are predominantly periplasmic. The polypeptide is Cell division protein FtsB (Erwinia tasmaniensis (strain DSM 17950 / CFBP 7177 / CIP 109463 / NCPPB 4357 / Et1/99)).